Reading from the N-terminus, the 376-residue chain is uncharacterized protein (376 aa).

Residues 82 to 372 (KIYDDSAVEK…ATSGILWRAL (291 aa)) enclose the Peptidase M14 domain. Histidine 138, glutamate 141, and histidine 283 together coordinate Zn(2+). Glutamate 344 (proton donor/acceptor) is an active-site residue.

Belongs to the peptidase M14 family. It depends on Zn(2+) as a cofactor.

This is an uncharacterized protein from Bacillus subtilis (strain 168).